Reading from the N-terminus, the 238-residue chain is Purine nucleoside phosphorylase DeoD-type (238 aa).

His-4 contributes to the a purine D-ribonucleoside binding site. Phosphate contacts are provided by residues Gly-20, Arg-24, Arg-43, and 87-90 (RVGS). Residues 179-181 (EME) and 203-204 (SD) contribute to the a purine D-ribonucleoside site. The active-site Proton donor is Asp-204.

This sequence belongs to the PNP/UDP phosphorylase family. In terms of assembly, homohexamer; trimer of homodimers.

The enzyme catalyses a purine D-ribonucleoside + phosphate = a purine nucleobase + alpha-D-ribose 1-phosphate. The catalysed reaction is a purine 2'-deoxy-D-ribonucleoside + phosphate = a purine nucleobase + 2-deoxy-alpha-D-ribose 1-phosphate. Catalyzes the reversible phosphorolytic breakdown of the N-glycosidic bond in the beta-(deoxy)ribonucleoside molecules, with the formation of the corresponding free purine bases and pentose-1-phosphate. This Histophilus somni (strain 129Pt) (Haemophilus somnus) protein is Purine nucleoside phosphorylase DeoD-type.